A 1485-amino-acid polypeptide reads, in one-letter code: MKPRAECCSPKFWLVLAVLAVSGSRARSQKSPPSIGIAVILVGTSDEVAIKDAHEKDDFHHLSVVPRVELVAMNETDPKSIITRICDLMSDRKIQGVVFADDTDQEAIAQILDFISAQTLTPILGIHGGSSMIMADKDESSMFFQFGPSIEQQASVMLNIMEEYDWYIFSIVTTYFPGYQDFVNKIRSTIENSFVGWELEEVLLLDMSLDDGDSKIQNQLKKLQSPIILLYCTKEEATYIFEVANSVGLTGYGYTWIVPSLVAGDTDTVPSEFPTGLISVSYDEWDYGLPARVRDGIAIITTAASDMLSEHSFIPEPKSSCYNTHEKRIYQSNMLNRYLINVTFEGRNLSFSEDGYQMHPKLVIILLNKERKWERVGKWKDKSLQMKYYVWPRMCPETEEQEDDHLSIVTLEEAPFVIVESVDPLSGTCMRNTVPCQKRIVSENKTDEEPGYIKKCCKGFCIDILKKISKSVKFTYDLYLVTNGKHGKKINGTWNGMIGEVVMKRAYMAVGSLTINEERSEVVDFSVPFIETGISVMVSRSNGTVSPSAFLEPFSADVWVMMFVMLLIVSAVAVFVFEYFSPVGYNRCLADGREPGGPSFTIGKAIWLLWGLVFNNSVPVQNPKGTTSKIMVSVWAFFAVIFLASYTANLAAFMIQEEYVDQVSGLSDKKFQRPNDFSPPFRFGTVPNGSTERNIRNNYAEMHAYMGKFNQRGVDDALLSLKTGKLDAFIYDAAVLNYMAGRDEGCKLVTIGSGKVFASTGYGIAIQKDSGWKRQVDLAILQLFGDGEMEELEALWLTGICHNEKNEVMSSQLDIDNMAGVFYMLGAAMALSLITFICEHLFYWQFRHCFMGVCSGKPGMVFSISRGIYSCIHGVAIEERQSVMNSPTATMNNTHSNILRLLRTAKNMANLSGVNGSPQSALDFIRRESSVYDISEHRRSFTHSDCKSYNNPPCEENLFSDYISEVERTFGNLQLKDSNVYQDHYHHHHRPHSIGSASSIDGLYDCDNPPFTTQPRSISKKPLDLGLPSSKHSQLSDLYGKFSFKSDRYSGHDDLIRSDVSDISTHTVTYGNIEGNAAKRRKQQYKDSLKKRPASAKSRREFDEIELAYRRRPPRSPDHKRYFRDKEGLRDFYLDQFRTKENSPHWEHVDLTDIYKEQSDDFKRDSVSGGGPCTNRSHLKHGAGDKHGVVSGVPAPWEKNLSNVDWEDRSGGNFCRSCPSKLHNYSTAVTGQNSGRQACIRCEACKKAGNLYDISEDNSLQELDQPAAPVAVPSNAPSTKYPQSPTNSKAQKKTRNKLRRQHSYDTFVDLQKEEAALAPRSVSLKDKGRFLDGSPYAHMFETPAGESTFANHESSVAAAGHRHHNNPGGGGYMLSKSLYPDRVTQNPFIPTFGDDQCLLHGSKSYFFRQPTVAGAPKARPDFRALVTNKPVVSALHGAVPGRFQKDICIGNQSNPCVPNNKNPRAFNGSSNGHVYEKLSSIESDV.

Residues 1–26 (MKPRAECCSPKFWLVLAVLAVSGSRA) form the signal peptide. Residues 27 to 557 (RSQKSPPSIG…SAFLEPFSAD (531 aa)) lie on the Extracellular side of the membrane. The N-linked (GlcNAc...) asparagine glycan is linked to Asn74. The cysteines at positions 86 and 321 are disulfide-linked. Residues His127 and Glu284 each contribute to the Zn(2+) site. 4 N-linked (GlcNAc...) asparagine glycosylation sites follow: Asn341, Asn348, Asn444, and Asn491. 2 cysteine pairs are disulfide-bonded: Cys429–Cys456 and Cys436–Cys457. L-glutamate-binding residues include Thr514 and Arg519. Asn542 is a glycosylation site (N-linked (GlcNAc...) asparagine). Residues 558–576 (VWVMMFVMLLIVSAVAVFV) form a helical membrane-spanning segment. Over 577–603 (FEYFSPVGYNRCLADGREPGGPSFTIG) the chain is Cytoplasmic. An intramembrane region (discontinuously helical) is located at residues 604 to 623 (KAIWLLWGLVFNNSVPVQNP). The pore-forming stretch occupies residues 604–623 (KAIWLLWGLVFNNSVPVQNP). Residues 624 to 630 (KGTTSKI) lie on the Cytoplasmic side of the membrane. The chain crosses the membrane as a helical span at residues 631–646 (MVSVWAFFAVIFLASY). The Extracellular segment spans residues 647 to 817 (TANLAAFMIQ…VMSSQLDIDN (171 aa)). N-linked (GlcNAc...) asparagine glycosylation occurs at Asn688. L-glutamate is bound by residues 690-691 (ST) and Asp732. Cys746 and Cys801 are joined by a disulfide. Residues 818–837 (MAGVFYMLGAAMALSLITFI) traverse the membrane as a helical segment. At 838–1485 (CEHLFYWQFR…EKLSSIESDV (648 aa)) the chain is on the cytoplasmic side. Phosphoserine occurs at positions 882, 886, 917, and 920. Phosphotyrosine is present on residues Tyr962 and Tyr1039. A phosphoserine mark is found at Ser1058, Ser1061, and Ser1064. Residues 1074-1097 (EGNAAKRRKQQYKDSLKKRPASAK) form a disordered region. Tyr1109 and Tyr1133 each carry phosphotyrosine. Residue Ser1143 is modified to Phosphoserine. The residue at position 1155 (Tyr1155) is a Phosphotyrosine. A disordered region spans residues 1162–1194 (FKRDSVSGGGPCTNRSHLKHGAGDKHGVVSGVP). 2 positions are modified to phosphoserine: Ser1255 and Ser1259. The span at 1269–1278 (PVAVPSNAPS) shows a compositional bias: low complexity. The segment at 1269-1302 (PVAVPSNAPSTKYPQSPTNSKAQKKTRNKLRRQH) is disordered. The segment covering 1280–1289 (KYPQSPTNSK) has biased composition (polar residues). Residues 1290 to 1301 (AQKKTRNKLRRQ) show a composition bias toward basic residues. The interval 1292 to 1304 (KKTRNKLRRQHSY) is interaction with DAPK1. A Phosphoserine; by DAPK1 modification is found at Ser1303. Tyr1475 is modified (phosphotyrosine). Positions 1483-1485 (SDV) match the PDZ-binding motif.

This sequence belongs to the glutamate-gated ion channel (TC 1.A.10.1) family. NR2B/GRIN2B subfamily. Heterotetramer. Forms heterotetrameric channels composed of two GluN1/zeta subunits (GRIN1), and two identical GluN2/epsilon subunits (GRIN2A, GRIN2B, GRIN2C or GRIN2D) or GluN3 subunits (GRIN3A or GRIN3B) (in vitro). Can also form heterotetrameric channels that contain at least two GluN1 subunits and at least two different GluN2 subunits (or a combination of one GluN2 and one GluN3 subunits) (in vitro). In vivo, the subunit composition may depend on the expression levels of the different subunits. Found in a complex with GRIN1, GRIN3A and PPP2CB. Found in a complex with GRIN1 and GRIN3B. Interacts with MAGI3. Interacts with HIP1 and Neto1. Interacts with PDZ domains of PATJ, DLG3 and DLG4. Interacts with DAPK1. Found in a complex with GRIN1 and PRR7. Interacts with PRR7. Interacts with CAMK2A. Interacts with ARC; preventing ARC oligomerization. Interacts with TMEM25. Interacts (via the extreme C-terminus) with FRMPD2 (via the second PDZ domain); the interaction is direct and is likely to promote NMDAR-mediated neural signal transmission. Interacts with FAM81A; the interaction facilitates condensate formation via liquid-liquid phase separation. Phosphorylated on tyrosine residues. Phosphorylation at Ser-1303 by DAPK1 enhances synaptic NMDA receptor channel activity.

Its subcellular location is the cell membrane. It localises to the postsynaptic cell membrane. The protein localises to the cell projection. The protein resides in the dendrite. It is found in the late endosome. Its subcellular location is the lysosome. It localises to the cytoplasm. The protein localises to the cytoskeleton. It catalyses the reaction Ca(2+)(in) = Ca(2+)(out). The catalysed reaction is Na(+)(in) = Na(+)(out). It carries out the reaction K(+)(in) = K(+)(out). Functionally, component of N-methyl-D-aspartate (NMDA) receptors (NMDARs) that function as heterotetrameric, ligand-gated cation channels with high calcium permeability and voltage-dependent block by Mg(2+). Participates in synaptic plasticity for learning and memory formation by contributing to the long-term depression (LTD) of hippocampus membrane currents. Channel activation requires binding of the neurotransmitter L-glutamate to the GluN2 subunit, glycine or D-serine binding to the GluN1 subunit, plus membrane depolarization to eliminate channel inhibition by Mg(2+). NMDARs mediate simultaneously the potasium efflux and the influx of calcium and sodium. Each GluN2 subunit confers differential attributes to channel properties, including activation, deactivation and desensitization kinetics, pH sensitivity, Ca2(+) permeability, and binding to allosteric modulators. In concert with DAPK1 at extrasynaptic sites, acts as a central mediator for stroke damage. Its phosphorylation at Ser-1303 by DAPK1 enhances synaptic NMDA receptor channel activity inducing injurious Ca2+ influx through them, resulting in an irreversible neuronal death. The sequence is that of Glutamate receptor ionotropic, NMDA 2B from Canis lupus familiaris (Dog).